The chain runs to 297 residues: MGFVKVVKNKQYFKRFQVKYKRRREGKTDYYARKRLTVQDKSKYNTPKYRLIVRLSNKDITCQIAYSRIEGDRIVCAAYSHELPKYGIKVGLTNYAAAYCTGLLLARRLLKQLKLDTLYTGTTEVDGDEYNVEEHDDGPGAFRCYLDTGLMRTTTGARIFGAMKGAVDGGLNIPHSTKRFPGYDNESKSFNADVHRQHIFAHHIANYMKTLEENEPENFQRQFSQYIKNGITADGIEEMYKKAHEAIRADPDRAEIVKTKEPVKKRWNRAKLTLSERKDRVKQIKASFQKKLEETEA.

It belongs to the universal ribosomal protein uL18 family. As to quaternary structure, component of the large ribosomal subunit (LSU).

Its subcellular location is the cytoplasm. The protein localises to the nucleus. Component of the ribosome, a large ribonucleoprotein complex responsible for the synthesis of proteins in the cell. The small ribosomal subunit (SSU) binds messenger RNAs (mRNAs) and translates the encoded message by selecting cognate aminoacyl-transfer RNA (tRNA) molecules. The large subunit (LSU) contains the ribosomal catalytic site termed the peptidyl transferase center (PTC), which catalyzes the formation of peptide bonds, thereby polymerizing the amino acids delivered by tRNAs into a polypeptide chain. The nascent polypeptides leave the ribosome through a tunnel in the LSU and interact with protein factors that function in enzymatic processing, targeting, and the membrane insertion of nascent chains at the exit of the ribosomal tunnel. This is Large ribosomal subunit protein uL18 (RpL5) from Lysiphlebus testaceipes (Greenbugs aphid parastoid).